Consider the following 393-residue polypeptide: Formate-dependent phosphoribosylglycinamide formyltransferase (393 aa).

N(1)-(5-phospho-beta-D-ribosyl)glycinamide is bound by residues 22-23 (EL) and E82. ATP is bound by residues R114, K155, 160–165 (SSGHGQ), 195–198 (EGFV), and E203. Positions 119 to 308 (RLAAEELGLP…EFALHARAIL (190 aa)) constitute an ATP-grasp domain. Residues E267 and E279 each coordinate Mg(2+). Residues D286, K356, and 363 to 364 (RR) each bind N(1)-(5-phospho-beta-D-ribosyl)glycinamide.

This sequence belongs to the PurK/PurT family. Homodimer.

The enzyme catalyses N(1)-(5-phospho-beta-D-ribosyl)glycinamide + formate + ATP = N(2)-formyl-N(1)-(5-phospho-beta-D-ribosyl)glycinamide + ADP + phosphate + H(+). It participates in purine metabolism; IMP biosynthesis via de novo pathway; N(2)-formyl-N(1)-(5-phospho-D-ribosyl)glycinamide from N(1)-(5-phospho-D-ribosyl)glycinamide (formate route): step 1/1. Involved in the de novo purine biosynthesis. Catalyzes the transfer of formate to 5-phospho-ribosyl-glycinamide (GAR), producing 5-phospho-ribosyl-N-formylglycinamide (FGAR). Formate is provided by PurU via hydrolysis of 10-formyl-tetrahydrofolate. The protein is Formate-dependent phosphoribosylglycinamide formyltransferase of Mannheimia succiniciproducens (strain KCTC 0769BP / MBEL55E).